Reading from the N-terminus, the 129-residue chain is Lysozyme C (129 aa).

Positions lysine 1–leucine 129 constitute a C-type lysozyme domain. 4 disulfides stabilise this stretch: cysteine 6-cysteine 127, cysteine 30-cysteine 115, cysteine 64-cysteine 80, and cysteine 76-cysteine 94. Active-site residues include glutamate 35 and aspartate 52.

It belongs to the glycosyl hydrolase 22 family. As to quaternary structure, monomer.

It is found in the secreted. The catalysed reaction is Hydrolysis of (1-&gt;4)-beta-linkages between N-acetylmuramic acid and N-acetyl-D-glucosamine residues in a peptidoglycan and between N-acetyl-D-glucosamine residues in chitodextrins.. Lysozymes have primarily a bacteriolytic function; those in tissues and body fluids are associated with the monocyte-macrophage system and enhance the activity of immunoagents. In Lophura leucomelanos (Kalij pheasant), this protein is Lysozyme C (LYZ).